A 412-amino-acid chain; its full sequence is Adherens junction-associated protein 1 (412 aa).

The N-terminal stretch at 1-43 is a signal peptide; that stretch reads MWIQQLLGLSSMSIRWPGRSLGSHAWILIAMLQLAVDFPSCDS. The Extracellular portion of the chain corresponds to 44–284; that stretch reads LGPGPEFRLL…GETSGLAVHQ (241 aa). Disordered regions lie at residues 62 to 175 and 243 to 271; these read LWSL…GRPT and DPWK…IQPP. A compositionally biased stretch (low complexity) spans 121 to 146; that stretch reads PPAATRSSPSLASATASSSIVTAGAA. Positions 160-171 are enriched in basic and acidic residues; the sequence is HDTEFNDFDFRG. Low complexity predominate over residues 248-263; that stretch reads TPVGVSTTEPSTSPSS. A helical transmembrane segment spans residues 285–305; the sequence is IITITVSLIMVIAALITTLVL. Residues 305–412 are targeting signals; that stretch reads LKNCCAPSGH…VSEKWFEISC (108 aa). Topologically, residues 306–412 are cytoplasmic; it reads KNCCAPSGHT…VSEKWFEISC (107 aa).

Forms a complex with CDH1 and CTNNB1; interacts directly with CTNNB1. Interacts with AP1M2 and isoform 2 of BSG/CD147.

It is found in the basolateral cell membrane. The protein resides in the apical cell membrane. The protein localises to the cell junction. Its subcellular location is the adherens junction. Functionally, plays a role in cell adhesion and cell migration. The sequence is that of Adherens junction-associated protein 1 (Ajap1) from Mus musculus (Mouse).